The sequence spans 253 residues: Glucosamine-6-phosphate deaminase (253 aa).

The active-site Proton acceptor; for enolization step is the aspartate 65. Residue asparagine 133 is the For ring-opening step of the active site. Histidine 135 serves as the catalytic Proton acceptor; for ring-opening step. Glutamate 140 functions as the For ring-opening step in the catalytic mechanism.

It belongs to the glucosamine/galactosamine-6-phosphate isomerase family. NagB subfamily.

The enzyme catalyses alpha-D-glucosamine 6-phosphate + H2O = beta-D-fructose 6-phosphate + NH4(+). Its pathway is amino-sugar metabolism; N-acetylneuraminate degradation; D-fructose 6-phosphate from N-acetylneuraminate: step 5/5. Functionally, catalyzes the reversible isomerization-deamination of glucosamine 6-phosphate (GlcN6P) to form fructose 6-phosphate (Fru6P) and ammonium ion. The polypeptide is Glucosamine-6-phosphate deaminase (Corynebacterium glutamicum (strain R)).